The following is a 498-amino-acid chain: ATP synthase subunit beta, chloroplastic (498 aa).

172–179 (GGAGVGKT) is a binding site for ATP.

This sequence belongs to the ATPase alpha/beta chains family. F-type ATPases have 2 components, CF(1) - the catalytic core - and CF(0) - the membrane proton channel. CF(1) has five subunits: alpha(3), beta(3), gamma(1), delta(1), epsilon(1). CF(0) has four main subunits: a(1), b(1), b'(1) and c(9-12).

The protein resides in the plastid. The protein localises to the chloroplast thylakoid membrane. It carries out the reaction ATP + H2O + 4 H(+)(in) = ADP + phosphate + 5 H(+)(out). Its function is as follows. Produces ATP from ADP in the presence of a proton gradient across the membrane. The catalytic sites are hosted primarily by the beta subunits. The chain is ATP synthase subunit beta, chloroplastic from Carica papaya (Papaya).